Consider the following 93-residue polypeptide: Cobalt transport protein CbiN (93 aa).

2 consecutive transmembrane segments (helical) span residues 5–25 and 63–83; these read LMLL…NHGG and LLFT…LGYC.

The protein belongs to the CbiN family. As to quaternary structure, forms an energy-coupling factor (ECF) transporter complex composed of an ATP-binding protein (A component, CbiO), a transmembrane protein (T component, CbiQ) and 2 possible substrate-capture proteins (S components, CbiM and CbiN) of unknown stoichimetry.

It is found in the cell inner membrane. The protein operates within cofactor biosynthesis; adenosylcobalamin biosynthesis. Its function is as follows. Part of the energy-coupling factor (ECF) transporter complex CbiMNOQ involved in cobalt import. The polypeptide is Cobalt transport protein CbiN (Salmonella choleraesuis (strain SC-B67)).